The primary structure comprises 258 residues: Deoxyribose-phosphate aldolase (258 aa).

D101 acts as the Proton donor/acceptor in catalysis. The active-site Schiff-base intermediate with acetaldehyde is K166. K200 serves as the catalytic Proton donor/acceptor.

It belongs to the DeoC/FbaB aldolase family. DeoC type 2 subfamily.

The protein resides in the cytoplasm. The catalysed reaction is 2-deoxy-D-ribose 5-phosphate = D-glyceraldehyde 3-phosphate + acetaldehyde. It participates in carbohydrate degradation; 2-deoxy-D-ribose 1-phosphate degradation; D-glyceraldehyde 3-phosphate and acetaldehyde from 2-deoxy-alpha-D-ribose 1-phosphate: step 2/2. Catalyzes a reversible aldol reaction between acetaldehyde and D-glyceraldehyde 3-phosphate to generate 2-deoxy-D-ribose 5-phosphate. This is Deoxyribose-phosphate aldolase from Actinobacillus pleuropneumoniae serotype 7 (strain AP76).